The sequence spans 82 residues: Protein RALF-like 8 (82 aa).

A signal peptide spans Met1–Ala28. 2 cysteine pairs are disulfide-bonded: Cys47–Cys55 and Cys67–Cys73.

Belongs to the plant rapid alkalinization factor (RALF) family. Expressed in leaves and flowers.

Its subcellular location is the secreted. Its function is as follows. Cell signaling peptide that may regulate plant stress, growth, and development. Mediates a rapid alkalinization of extracellular space by mediating a transient increase in the cytoplasmic Ca(2+) concentration leading to a calcium-dependent signaling events through a cell surface receptor and a concomitant activation of some intracellular mitogen-activated protein kinases. The polypeptide is Protein RALF-like 8 (RALFL8) (Arabidopsis thaliana (Mouse-ear cress)).